The following is an 860-amino-acid chain: Photoactivated adenylate cyclase subunit beta (860 aa).

The BLUF 1 domain maps to leucine 56–lysine 149. Positions valine 205–alanine 333 constitute a Guanylate cyclase 1 domain. The disordered stretch occupies residues arginine 420–glutamine 443. A BLUF 2 domain is found at leucine 471–threonine 563. The 130-residue stretch at valine 619–glutamate 748 folds into the Guanylate cyclase 2 domain. The disordered stretch occupies residues lysine 819–arginine 860. The segment covering arginine 847 to arginine 860 has biased composition (polar residues).

This sequence belongs to the adenylyl cyclase class-4/guanylyl cyclase family. In terms of assembly, heterotetramer of two alpha and two beta subunits. It depends on FAD as a cofactor.

It localises to the cell projection. Its subcellular location is the cilium. It is found in the flagellum. It catalyses the reaction ATP = 3',5'-cyclic AMP + diphosphate. In terms of biological role, acts as a photoreceptor for the step-up photophobic response. In Euglena longa (Euglenophycean alga), this protein is Photoactivated adenylate cyclase subunit beta.